Reading from the N-terminus, the 1181-residue chain is HEAT repeat-containing protein 6 (1181 aa).

An HEAT 1 repeat occupies 159–198 (PELLGNTGLLMKLSDLAQSDPEVRRAAVHCMANLCLSVPG). Disordered regions lie at residues 292–347 (QYDG…PVTG) and 371–390 (LDGS…SSSS). The segment covering 300 to 312 (KPQQSESSASRPT) has biased composition (polar residues). Basic residues predominate over residues 313–325 (LNKKKKSKVKPKK). Residues S336 and S337 each carry the phosphoserine modification. S399 and S402 each carry phosphoserine. HEAT repeat units follow at residues 452-490 (ELGS…GSKQ), 515-552 (SIRE…NAPY), and 558-595 (SLLT…THAP). Residues 613–646 (NSNSATPHLSPPDWWKKAPAGPSLEETSVSSPKG) form a disordered region. T618 carries the post-translational modification Phosphothreonine. Residues 637-646 (EETSVSSPKG) are compositionally biased toward polar residues. At S643 the chain carries Phosphoserine.

As to expression, amplified in breast cancer cell lines MCF-7 and BT-474.

Amplification-dependent oncogene. This chain is HEAT repeat-containing protein 6 (HEATR6), found in Homo sapiens (Human).